The sequence spans 43 residues: Parvalbumin beta (43 aa).

2 consecutive EF-hand domains span residues 1-20 and 22-43; these read KVFE…LKLF and LSSA…ALVK. 7 residues coordinate Ca(2+): Asp7, Asp9, Ser11, Phe12, Glu14, Glu16, and Glu37.

Detected in muscle and cutaneous mucus. In the skin, detected in cells in the basal region of the glandular epithelium of the dermal mucus glands (at protein level).

It localises to the cytoplasm. The protein resides in the secreted. Functionally, in muscle, parvalbumin is thought to be involved in relaxation after contraction. It binds two calcium ions. The sequence is that of Parvalbumin beta from Rana temporaria (European common frog).